Consider the following 705-residue polypeptide: Ribosomal RNA large subunit methyltransferase K/L (705 aa).

Residues 42-154 (LAQKVCLSTR…RYGVSMYIDY (113 aa)) enclose the THUMP domain.

It belongs to the methyltransferase superfamily. RlmKL family.

The protein resides in the cytoplasm. It carries out the reaction guanosine(2445) in 23S rRNA + S-adenosyl-L-methionine = N(2)-methylguanosine(2445) in 23S rRNA + S-adenosyl-L-homocysteine + H(+). The enzyme catalyses guanosine(2069) in 23S rRNA + S-adenosyl-L-methionine = N(2)-methylguanosine(2069) in 23S rRNA + S-adenosyl-L-homocysteine + H(+). In terms of biological role, specifically methylates the guanine in position 2445 (m2G2445) and the guanine in position 2069 (m7G2069) of 23S rRNA. The chain is Ribosomal RNA large subunit methyltransferase K/L from Pseudoalteromonas translucida (strain TAC 125).